Here is a 459-residue protein sequence, read N- to C-terminus: MFIDDTIAAIATAPGEGGIGILRISGEKALKVAEEIFKSMSGKSIEEYNKRTLIYGNIVDNENIIDEVLLAYMKGPNSYTGEDVIEINCHGGFISVKKILELILSKDVRLAEAGEFTKRAFLNGRIDLSQAEAVIDVIKAKTDIAHEVAQNQLEGSLSKKIRELRDKVTEILAHVEVAIDYPEEDIEHITYQTLKEKTDELKKDIKKLYDTAESGKILREGLKTVIVGKPNVGKSSLLNSILGENRAIVTDIPGTTRDVIEEFVNIKGIPLKIVDTAGIRDTDDIVEKIGVEKSKESFTSADLIVMVLDASRKLSEEDIEILEKLKDKQTIVLLNKNDLKQEIEEEKILKYVENNSIIKISALQQEGIEELQDKIESMVYKGSIKNNSSLVVTNSRHKDALSKAYKSATDALIALEQSMPFDFVEVDLKNIWDYLGYINGDTVTEDLLDNIFHNFCIGK.

R23, E86, and R125 together coordinate (6S)-5-formyl-5,6,7,8-tetrahydrofolate. In terms of domain architecture, TrmE-type G spans 221–380; sequence GLKTVIVGKP…LQDKIESMVY (160 aa). Residue N231 participates in K(+) binding. GTP is bound by residues 231 to 236, 250 to 256, and 275 to 278; these read NVGKSS, TDIPGTT, and DTAG. Residue S235 coordinates Mg(2+). Residues T250, I252, and T255 each contribute to the K(+) site. T256 serves as a coordination point for Mg(2+). K459 contacts (6S)-5-formyl-5,6,7,8-tetrahydrofolate.

The protein belongs to the TRAFAC class TrmE-Era-EngA-EngB-Septin-like GTPase superfamily. TrmE GTPase family. Homodimer. Heterotetramer of two MnmE and two MnmG subunits. Requires K(+) as cofactor.

The protein localises to the cytoplasm. Its function is as follows. Exhibits a very high intrinsic GTPase hydrolysis rate. Involved in the addition of a carboxymethylaminomethyl (cmnm) group at the wobble position (U34) of certain tRNAs, forming tRNA-cmnm(5)s(2)U34. The protein is tRNA modification GTPase MnmE of Clostridioides difficile (strain 630) (Peptoclostridium difficile).